The chain runs to 200 residues: MAKVQILNMVVLDNPCPFHNPFQFEITFECIEDLPDDLEWKIIYVGSAESEEYDQVLDSVLVGPVPAGRHMFVFQADAPNSSLIPESDAVGVTVVLITCTYRGQEFIRVGYYVNNEYSDPELRENPPLKPHFGQLQRNILASNPRVTRFHINWECASEAKMEDIENVDPASNAMLPPNCAPSKGLAAALNPIPENSMDCM.

It belongs to the ASF1 family. As to quaternary structure, interacts with histone H3 and histone H4.

The protein localises to the nucleus. Histone chaperone that facilitates histone deposition and histone exchange and removal during nucleosome assembly and disassembly. The protein is Histone chaperone asf1b (asf1b) of Xenopus tropicalis (Western clawed frog).